A 373-amino-acid chain; its full sequence is NADPH-dependent 3-keto-steroid reductase HSD3B3 (373 aa).

Residues 10–15, Y155, and K159 contribute to the NADP(+) site; that span reads GAGGFL. K159 functions as the Proton donor in the catalytic mechanism. Residues 288–308 traverse the membrane as a helical segment; it reads VALLYWFGFLLETVSFLLRPV.

Belongs to the 3-beta-HSD family. In terms of tissue distribution, high levels in adrenal gland, kidney and male liver (at protein level). Low levels in female liver (at protein level). Expressed in ovaries (at protein level).

The protein resides in the endoplasmic reticulum membrane. It localises to the mitochondrion membrane. It carries out the reaction a 3beta-hydroxysteroid + NADP(+) = a 3-oxosteroid + NADPH + H(+). The enzyme catalyses 5alpha-androstane-3beta,17beta-diol + NADP(+) = 17beta-hydroxy-5alpha-androstan-3-one + NADPH + H(+). The protein operates within steroid metabolism. Functionally, responsible for the reduction of the oxo group on the C-3 of 5alpha-androstane steroids. Catalyzes the conversion of dihydrotestosterone to its inactive form 5alpha-androstanediol, that does not bind androgen receptor/AR. Does not function as an isomerase. The protein is NADPH-dependent 3-keto-steroid reductase HSD3B3 (HSD3B3) of Mesocricetus auratus (Golden hamster).